A 144-amino-acid polypeptide reads, in one-letter code: NADH-ubiquinone oxidoreductase chain 6 (144 aa).

5 helical membrane passes run 1 to 21 (MLGS…INVD), 26 to 46 (SFFL…FLHV), 47 to 67 (WFSY…LVYF), 76 to 96 (VVTP…YPFF), and 108 to 128 (FYFS…IFFM).

Belongs to the complex I subunit 6 family.

The protein resides in the mitochondrion membrane. It catalyses the reaction a ubiquinone + NADH + 5 H(+)(in) = a ubiquinol + NAD(+) + 4 H(+)(out). Core subunit of the mitochondrial membrane respiratory chain NADH dehydrogenase (Complex I) that is believed to belong to the minimal assembly required for catalysis. Complex I functions in the transfer of electrons from NADH to the respiratory chain. The immediate electron acceptor for the enzyme is believed to be ubiquinone. The chain is NADH-ubiquinone oxidoreductase chain 6 (ND6) from Ascaris suum (Pig roundworm).